The primary structure comprises 167 residues: Chorion class CB protein PC404 (167 aa).

The left arm stretch occupies residues I1–A55. The central domain stretch occupies residues A56–E126. Positions T127–Y167 are right arm.

The protein belongs to the chorion protein family.

Functionally, this protein is one of many from the eggshell of the silk moth. The chain is Chorion class CB protein PC404 from Antheraea polyphemus (Polyphemus moth).